The following is a 204-amino-acid chain: Ribonuclease HII (204 aa).

One can recognise an RNase H type-2 domain in the interval 1–197 (MTLGIDEAGR…KNRILNPKLL (197 aa)). 3 residues coordinate a divalent metal cation: Asp6, Glu7, and Asp103.

This sequence belongs to the RNase HII family. The cofactor is Mn(2+). Mg(2+) is required as a cofactor.

The protein localises to the cytoplasm. It carries out the reaction Endonucleolytic cleavage to 5'-phosphomonoester.. Endonuclease that specifically degrades the RNA of RNA-DNA hybrids. The sequence is that of Ribonuclease HII from Helicobacter pylori (strain HPAG1).